Reading from the N-terminus, the 173-residue chain is Peptidoglycan-associated lipoprotein (173 aa).

Residues 1–21 (MKSKKIFKILTLLLPMITTFS) form the signal peptide. Cys-22 is lipidated: N-palmitoyl cysteine. Cys-22 carries the S-diacylglycerol cysteine lipid modification. In terms of domain architecture, OmpA-like spans 59–173 (ETLEKLKKGN…KNRRSVIIYQ (115 aa)).

The protein belongs to the Pal lipoprotein family.

It is found in the cell outer membrane. In Buchnera aphidicola subsp. Baizongia pistaciae (strain Bp), this protein is Peptidoglycan-associated lipoprotein.